The chain runs to 444 residues: Amino-acid acetyltransferase (444 aa).

An N-acetyltransferase domain is found at 295-434; it reads EKVRRANIND…QALYNYQRRS (140 aa).

This sequence belongs to the acetyltransferase family. ArgA subfamily. As to quaternary structure, homohexamer.

The protein localises to the cytoplasm. The catalysed reaction is L-glutamate + acetyl-CoA = N-acetyl-L-glutamate + CoA + H(+). The protein operates within amino-acid biosynthesis; L-arginine biosynthesis; N(2)-acetyl-L-ornithine from L-glutamate: step 1/4. This Proteus mirabilis (strain HI4320) protein is Amino-acid acetyltransferase.